Consider the following 194-residue polypeptide: dTTP/UTP pyrophosphatase (194 aa).

Catalysis depends on Asp-76, which acts as the Proton acceptor.

It belongs to the Maf family. YhdE subfamily. A divalent metal cation is required as a cofactor.

The protein resides in the cytoplasm. The enzyme catalyses dTTP + H2O = dTMP + diphosphate + H(+). It carries out the reaction UTP + H2O = UMP + diphosphate + H(+). Its function is as follows. Nucleoside triphosphate pyrophosphatase that hydrolyzes dTTP and UTP. May have a dual role in cell division arrest and in preventing the incorporation of modified nucleotides into cellular nucleic acids. This chain is dTTP/UTP pyrophosphatase, found in Shewanella oneidensis (strain ATCC 700550 / JCM 31522 / CIP 106686 / LMG 19005 / NCIMB 14063 / MR-1).